Consider the following 543-residue polypeptide: Glucose-6-phosphate isomerase (543 aa).

Catalysis depends on glutamate 351, which acts as the Proton donor. Catalysis depends on residues histidine 382 and lysine 511.

Belongs to the GPI family.

It localises to the cytoplasm. The enzyme catalyses alpha-D-glucose 6-phosphate = beta-D-fructose 6-phosphate. It functions in the pathway carbohydrate biosynthesis; gluconeogenesis. Its pathway is carbohydrate degradation; glycolysis; D-glyceraldehyde 3-phosphate and glycerone phosphate from D-glucose: step 2/4. Catalyzes the reversible isomerization of glucose-6-phosphate to fructose-6-phosphate. The chain is Glucose-6-phosphate isomerase from Hydrogenovibrio crunogenus (strain DSM 25203 / XCL-2) (Thiomicrospira crunogena).